The sequence spans 98 residues: (4S)-4-hydroxy-5-phosphonooxypentane-2,3-dione isomerase (98 aa).

The region spanning 2–91 (NVTLVEINIK…MSQPRQKRSF (90 aa)) is the ABM domain.

It belongs to the LsrG family. In terms of assembly, homodimer.

The protein resides in the cytoplasm. It catalyses the reaction (2S)-2-hydroxy-3,4-dioxopentyl phosphate = 3-hydroxy-2,4-dioxopentyl phosphate. Functionally, involved in the degradation of phospho-AI-2, thereby terminating induction of the lsr operon and closing the AI-2 signaling cycle. Catalyzes the conversion of (4S)-4-hydroxy-5-phosphonooxypentane-2,3-dione (P-DPD) to 3-hydroxy-5-phosphonooxypentane-2,4-dione (P-HPD). In Klebsiella pneumoniae subsp. pneumoniae (strain ATCC 700721 / MGH 78578), this protein is (4S)-4-hydroxy-5-phosphonooxypentane-2,3-dione isomerase.